The following is a 214-amino-acid chain: Thymidylate kinase (214 aa).

An ATP-binding site is contributed by 7-14 (GIDGAGKS).

This sequence belongs to the thymidylate kinase family.

The enzyme catalyses dTMP + ATP = dTDP + ADP. Its function is as follows. Phosphorylation of dTMP to form dTDP in both de novo and salvage pathways of dTTP synthesis. This Chlorobaculum tepidum (strain ATCC 49652 / DSM 12025 / NBRC 103806 / TLS) (Chlorobium tepidum) protein is Thymidylate kinase.